The chain runs to 467 residues: MAAKLLLLLCLFSGLHARSRRVEEDENEDSPSNQKWVLAPKSQDTDVTLILNKLLREYDKKLRPDIGIKPTVIDVDIYVNSIGPVSSINMEYQIDIFFAQTWTDSRLRFNSTMKILTLNSNMVGLIWIPDTIFRNSKTAEAHWITTPNQLLRIWNDGKILYTLRLTINAECQLQLHNFPMDAHACPLTFSSYGYPKEEMIYRWRKNSVEAADQKSWRLYQFDFMGLRNTTEIVTTSAGDYVVMTIYFELSRRMGYFTIQTYIPCILTVVLSWVSFWIKKDATPARTTLGITTVLTMTTLSTIARKSLPRVSYVTAMDLFVTVCFLFVFAALMEYATLNYYSSCRKPTIRKKKTSLLHPDSTRWIPDRISLQAPSNYSLLDMRPPPPVMITLNNSMYWQEFEDTCVYECLDGKDCQSFFCCYEECKSGSWRRGRIHIDVSELDSYSRVFFPTSFLLFNLVYWVGYLYL.

The N-terminal stretch at 1-17 is a signal peptide; the sequence is MAAKLLLLLCLFSGLHA. Residues 18-256 are Extracellular-facing; sequence RSRRVEEDEN…FELSRRMGYF (239 aa). An N-linked (GlcNAc...) asparagine glycan is attached at Asn110. Cys171 and Cys185 are joined by a disulfide. Asn228 is a glycosylation site (N-linked (GlcNAc...) asparagine). A helical membrane pass occupies residues 257–277; the sequence is TIQTYIPCILTVVLSWVSFWI. Residues 278-283 lie on the Cytoplasmic side of the membrane; sequence KKDATP. The helical transmembrane segment at 284 to 303 threads the bilayer; the sequence is ARTTLGITTVLTMTTLSTIA. Residues 304 to 311 are Extracellular-facing; sequence RKSLPRVS. Residues 312 to 332 form a helical membrane-spanning segment; the sequence is YVTAMDLFVTVCFLFVFAALM. Over 333–446 the chain is Cytoplasmic; that stretch reads EYATLNYYSS…DVSELDSYSR (114 aa). A helical membrane pass occupies residues 447–467; the sequence is VFFPTSFLLFNLVYWVGYLYL.

Belongs to the ligand-gated ion channel (TC 1.A.9) family. Gamma-aminobutyric acid receptor (TC 1.A.9.5) subfamily. GABRG3 sub-subfamily. As to quaternary structure, heteropentamer, formed by a combination of alpha (GABRA1-6), beta (GABRB1-3), gamma (GABRG1-3), delta (GABRD), epsilon (GABRE), rho (GABRR1-3), pi (GABRP) and theta (GABRQ) chains, each subunit exhibiting distinct physiological and pharmacological properties. May be palmitoylated. As to expression, expressed in brain.

It is found in the postsynaptic cell membrane. The protein localises to the cell membrane. The catalysed reaction is chloride(in) = chloride(out). Its function is as follows. Gamma subunit of the heteropentameric ligand-gated chloride channel gated by gamma-aminobutyric acid (GABA), a major inhibitory neurotransmitter in the brain. GABA-gated chloride channels, also named GABA(A) receptors (GABAAR), consist of five subunits arranged around a central pore and contain GABA active binding site(s) located at the alpha and beta subunit interface(s). When activated by GABA, GABAARs selectively allow the flow of chloride across the cell membrane down their electrochemical gradient. This chain is Gamma-aminobutyric acid receptor subunit gamma-3, found in Mus musculus (Mouse).